Here is a 756-residue protein sequence, read N- to C-terminus: Deoxynucleotidyltransferase terminal-interacting protein 2 (756 aa).

The tract at residues 1–99 (MVVTRSARAK…AESNYSVSEH (99 aa)) is disordered. Residues 9 to 21 (AKASIQAASAESS) show a composition bias toward low complexity. Position 21 is a phosphoserine (serine 21). 2 stretches are compositionally biased toward polar residues: residues 35–55 (PESS…TGKQ) and 80–96 (EPST…NYSV). A Phosphoserine modification is found at serine 117. A Phosphothreonine modification is found at threonine 129. 5 positions are modified to phosphoserine: serine 141, serine 145, serine 148, serine 184, and serine 194. The disordered stretch occupies residues 156–261 (PTEKTTGARR…LSEINKPNFY (106 aa)). The span at 201 to 211 (RRTRSMQRKLK) shows a compositional bias: basic residues. Glycyl lysine isopeptide (Lys-Gly) (interchain with G-Cter in SUMO2) cross-links involve residues lysine 217 and lysine 220. The residue at position 232 (threonine 232) is a Phosphothreonine. Phosphoserine is present on residues serine 239, serine 251, and serine 253. The segment covering 242–256 (RQTSHLQARSLSEIN) has biased composition (polar residues). Glycyl lysine isopeptide (Lys-Gly) (interchain with G-Cter in SUMO2) cross-links involve residues lysine 257, lysine 316, and lysine 321. Serine 324 and serine 330 each carry phosphoserine. Lysine 345 is covalently cross-linked (Glycyl lysine isopeptide (Lys-Gly) (interchain with G-Cter in SUMO2)). Phosphoserine is present on serine 381. Lysine 384 participates in a covalent cross-link: Glycyl lysine isopeptide (Lys-Gly) (interchain with G-Cter in SUMO2). Residues serine 434 and serine 512 each carry the phosphoserine modification. A coiled-coil region spans residues 505 to 542 (LEEEDKASEVAIEEEKEEEEDEKSEEDSSDHDENEDEF). Residues 510–547 (KASEVAIEEEKEEEEDEKSEEDSSDHDENEDEFSDEED) form a disordered region. A tdBR region; mediates interaction with DNTT region spans residues 548–605 (FLNSTKAKLLKLTSSSIDPGLSIKQLGGLYINFNADKLQSNKRTLTQIKEKKKNELLQ). Residue lysine 558 forms a Glycyl lysine isopeptide (Lys-Gly) (interchain with G-Cter in SUMO2) linkage. Position 569 is a phosphoserine (serine 569). Residues lysine 584 and lysine 606 each participate in a glycyl lysine isopeptide (Lys-Gly) (interchain with G-Cter in SUMO2) cross-link. Position 610 is a phosphothreonine (threonine 610). Residues lysine 626, lysine 649, lysine 658, lysine 686, and lysine 731 each participate in a glycyl lysine isopeptide (Lys-Gly) (interchain with G-Cter in SUMO2) cross-link.

In terms of assembly, forms a ternary complex with DNTT and core histone; interaction with PCNA releases DNTT and H2A/H2B histones from this ternary complex. Interacts with ESR1, ESR2, PPARG and RXRA. Part of the small subunit (SSU) processome, composed of more than 70 proteins and the RNA chaperone small nucleolar RNA (snoRNA) U3. As to expression, widely expressed with higher levels in testis.

Its subcellular location is the nucleus. It localises to the nucleolus. Regulates the transcriptional activity of DNTT and ESR1. May function as a chromatin remodeling protein. Part of the small subunit (SSU) processome, first precursor of the small eukaryotic ribosomal subunit. During the assembly of the SSU processome in the nucleolus, many ribosome biogenesis factors, an RNA chaperone and ribosomal proteins associate with the nascent pre-rRNA and work in concert to generate RNA folding, modifications, rearrangements and cleavage as well as targeted degradation of pre-ribosomal RNA by the RNA exosome. This chain is Deoxynucleotidyltransferase terminal-interacting protein 2, found in Homo sapiens (Human).